We begin with the raw amino-acid sequence, 466 residues long: Uronate isomerase (466 aa).

The protein belongs to the metallo-dependent hydrolases superfamily. Uronate isomerase family.

It catalyses the reaction D-glucuronate = D-fructuronate. The enzyme catalyses aldehydo-D-galacturonate = keto-D-tagaturonate. Its pathway is carbohydrate metabolism; pentose and glucuronate interconversion. This Lachnoclostridium phytofermentans (strain ATCC 700394 / DSM 18823 / ISDg) (Clostridium phytofermentans) protein is Uronate isomerase.